The sequence spans 96 residues: Evasin P1100 (96 aa).

Residues 1-28 (MAFNVITFLQFSVFVVILFNINLHSASA) form the signal peptide. 3 disulfides stabilise this stretch: cysteine 48/cysteine 67, cysteine 52/cysteine 69, and cysteine 63/cysteine 80. Asparagine 51 is a glycosylation site (N-linked (GlcNAc...) asparagine). Residue asparagine 74 is glycosylated (N-linked (GlcNAc...) asparagine).

The protein localises to the secreted. Its function is as follows. Salivary chemokine-binding protein which binds to host chemokines CXCL1, CXCL2, CXCL3, CXCL5, CXCL6, CXCL10, CXCL11 and CXCL13. The protein is Evasin P1100 of Ixodes ricinus (Common tick).